The following is a 101-amino-acid chain: Small ribosomal subunit protein bS18c (101 aa).

Positions 1-19 are enriched in basic residues; sequence MDKSKQLFRKSKRSFRRRL. Positions 1–23 are disordered; it reads MDKSKQLFRKSKRSFRRRLPPIG.

The protein belongs to the bacterial ribosomal protein bS18 family. Part of the 30S ribosomal subunit.

The protein localises to the plastid. The protein resides in the chloroplast. The polypeptide is Small ribosomal subunit protein bS18c (Acorus calamus (Sweet flag)).